The chain runs to 252 residues: 5-oxoprolinase subunit A (252 aa).

Belongs to the LamB/PxpA family. In terms of assembly, forms a complex composed of PxpA, PxpB and PxpC.

The catalysed reaction is 5-oxo-L-proline + ATP + 2 H2O = L-glutamate + ADP + phosphate + H(+). Catalyzes the cleavage of 5-oxoproline to form L-glutamate coupled to the hydrolysis of ATP to ADP and inorganic phosphate. This chain is 5-oxoprolinase subunit A, found in Mycolicibacterium gilvum (strain PYR-GCK) (Mycobacterium gilvum (strain PYR-GCK)).